The following is a 421-amino-acid chain: Proton/sodium-glutamate symport protein (421 aa).

Residues 1 to 3 (MRK) are Cytoplasmic-facing. The chain crosses the membrane as a helical span at residues 4–24 (IGLAWQIFIGLILGIIVGAIF). The Extracellular segment spans residues 25–43 (YGNPKVATYLQPIGDIFLR). Residues 44–64 (LIKMIVIPIVISSLVVGVASV) traverse the membrane as a helical segment. At 65–77 (GDLKKLGKLGGKT) the chain is on the cytoplasmic side. The helical transmembrane segment at 78 to 98 (IIYFEIITTIAIVVGLLAANI) threads the bilayer. Residues 99–148 (FQPGTGVNMKSLEKTDIQSYVDTTNEVQHHSMVETFVNIVPKNIFESLTK) lie on the Extracellular side of the membrane. A helical transmembrane segment spans residues 149 to 169 (GDMLPIIFFSVMFGLGVAAIG). Topologically, residues 170-198 (EKGKPVLQFFQGTAEAMFYVTNQIMKFAP) are cytoplasmic. Residues 199–219 (FGVFALIGVTVSKFGVESLIP) form a helical membrane-spanning segment. At 220–222 (LSK) the chain is on the extracellular side. The chain crosses the membrane as a helical span at residues 223–243 (LVIVVYATMVFFIFVVLGGVA). Position 244 (Lys-244) is a topological domain, cytoplasmic. The chain crosses the membrane as a helical span at residues 245 to 265 (LFGINIFHIIKILKDELILAY). The Extracellular portion of the chain corresponds to 266-306 (STASSETVLPKIMEKMENFGCPKAITSFVIPTGYSFNLDGS). Residues 307 to 327 (TLYQALAAIFIAQLYGIDMPI) traverse the membrane as a helical segment. Residues 328-330 (SQQ) are Cytoplasmic-facing. The next 2 helical transmembrane spans lie at 331–351 (ISLL…PGVS) and 352–372 (FVVL…LAFI). The Cytoplasmic portion of the chain corresponds to 373-421 (AGIDRILDMARTAVNVIGNSLAAIIMSKWEGQYNEEKGKQYIAQLQQSA).

This sequence belongs to the dicarboxylate/amino acid:cation symporter (DAACS) (TC 2.A.23) family. As to quaternary structure, homotrimer.

The protein localises to the cell membrane. Functionally, this carrier protein is part of the Na(+)-dependent, binding-protein-independent glutamate-aspartate transport system. This is Proton/sodium-glutamate symport protein (gltT) from Geobacillus stearothermophilus (Bacillus stearothermophilus).